The chain runs to 673 residues: Protein kinase ORF74 (673 aa).

One can recognise a Protein kinase domain in the interval 128–404; sequence TDTDEAVARG…ARELLVYPRY (277 aa). The active-site Proton acceptor is the Asp-252. The interval 340–364 is disordered; sequence MDNDALDSRRTGRDGDPVNPEGFGT. A compositionally biased stretch (basic and acidic residues) spans 345–355; the sequence is LDSRRTGRDGD.

It belongs to the protein kinase superfamily. Ser/Thr protein kinase family.

It catalyses the reaction L-seryl-[protein] + ATP = O-phospho-L-seryl-[protein] + ADP + H(+). It carries out the reaction L-threonyl-[protein] + ATP = O-phospho-L-threonyl-[protein] + ADP + H(+). This Ictalurid herpesvirus 1 (strain Auburn) (IcHV-1) protein is Protein kinase ORF74 (ORF74).